The following is a 204-amino-acid chain: CDP-archaeol synthase (204 aa).

The next 6 helical transmembrane spans lie at 5–25 (VYAC…YVIL), 43–63 (MLWV…SRLV), 91–111 (FEGF…LAYA), 116–136 (GVSA…GAFV), 147–167 (PAIL…QGLF), and 175–195 (VVVA…MAAF).

Belongs to the CDP-archaeol synthase family. Requires Mg(2+) as cofactor.

The protein resides in the cell membrane. The enzyme catalyses 2,3-bis-O-(geranylgeranyl)-sn-glycerol 1-phosphate + CTP + H(+) = CDP-2,3-bis-O-(geranylgeranyl)-sn-glycerol + diphosphate. It participates in membrane lipid metabolism; glycerophospholipid metabolism. Its function is as follows. Catalyzes the formation of CDP-2,3-bis-(O-geranylgeranyl)-sn-glycerol (CDP-archaeol) from 2,3-bis-(O-geranylgeranyl)-sn-glycerol 1-phosphate (DGGGP) and CTP. This reaction is the third ether-bond-formation step in the biosynthesis of archaeal membrane lipids. The sequence is that of CDP-archaeol synthase from Thermofilum pendens (strain DSM 2475 / Hrk 5).